The primary structure comprises 328 residues: Malate dehydrogenase 2 (328 aa).

12–18 lines the NAD(+) pocket; the sequence is GAAGQIA. The substrate site is built by R93 and R99. NAD(+) contacts are provided by residues N106, Q113, and 130–132; that span reads VGN. Residues N132 and R163 each contribute to the substrate site. Residue H188 is the Proton acceptor of the active site.

The protein belongs to the LDH/MDH superfamily. MDH type 2 family.

It catalyses the reaction (S)-malate + NAD(+) = oxaloacetate + NADH + H(+). Functionally, catalyzes the reversible oxidation of malate to oxaloacetate. The polypeptide is Malate dehydrogenase 2 (Burkholderia vietnamiensis (strain G4 / LMG 22486) (Burkholderia cepacia (strain R1808))).